The sequence spans 804 residues: Elongation factor G, mitochondrial (804 aa).

A mitochondrion-targeting transit peptide spans 1 to 9 (MVRPAQVRA). The tr-type G domain occupies 103 to 389 (SKVRNIGIAA…GVCDYLPNPS (287 aa)). GTP contacts are provided by residues 112 to 119 (AHIDSGKT), 187 to 191 (DTPGH), and 241 to 244 (NKMD).

This sequence belongs to the TRAFAC class translation factor GTPase superfamily. Classic translation factor GTPase family. EF-G/EF-2 subfamily.

Its subcellular location is the mitochondrion. The protein operates within protein biosynthesis; polypeptide chain elongation. Its function is as follows. Mitochondrial GTPase that catalyzes the GTP-dependent ribosomal translocation step during translation elongation. During this step, the ribosome changes from the pre-translocational (PRE) to the post-translocational (POST) state as the newly formed A-site-bound peptidyl-tRNA and P-site-bound deacylated tRNA move to the P and E sites, respectively. Catalyzes the coordinated movement of the two tRNA molecules, the mRNA and conformational changes in the ribosome. The chain is Elongation factor G, mitochondrial (mef1) from Talaromyces stipitatus (strain ATCC 10500 / CBS 375.48 / QM 6759 / NRRL 1006) (Penicillium stipitatum).